The following is a 212-amino-acid chain: Imidazole glycerol phosphate synthase subunit HisH (212 aa).

A Glutamine amidotransferase type-1 domain is found at 1–211 (MIGVIDYGMG…KQFTQEQKVK (211 aa)). C79 functions as the Nucleophile in the catalytic mechanism. Catalysis depends on residues H186 and E188.

In terms of assembly, heterodimer of HisH and HisF.

Its subcellular location is the cytoplasm. The catalysed reaction is 5-[(5-phospho-1-deoxy-D-ribulos-1-ylimino)methylamino]-1-(5-phospho-beta-D-ribosyl)imidazole-4-carboxamide + L-glutamine = D-erythro-1-(imidazol-4-yl)glycerol 3-phosphate + 5-amino-1-(5-phospho-beta-D-ribosyl)imidazole-4-carboxamide + L-glutamate + H(+). It catalyses the reaction L-glutamine + H2O = L-glutamate + NH4(+). It participates in amino-acid biosynthesis; L-histidine biosynthesis; L-histidine from 5-phospho-alpha-D-ribose 1-diphosphate: step 5/9. Functionally, IGPS catalyzes the conversion of PRFAR and glutamine to IGP, AICAR and glutamate. The HisH subunit catalyzes the hydrolysis of glutamine to glutamate and ammonia as part of the synthesis of IGP and AICAR. The resulting ammonia molecule is channeled to the active site of HisF. The protein is Imidazole glycerol phosphate synthase subunit HisH of Bacillus licheniformis (strain ATCC 14580 / DSM 13 / JCM 2505 / CCUG 7422 / NBRC 12200 / NCIMB 9375 / NCTC 10341 / NRRL NRS-1264 / Gibson 46).